The sequence spans 380 residues: Chaperone protein DnaJ (380 aa).

The 66-residue stretch at 5–70 folds into the J domain; that stretch reads DYYEVLGVAK…QKRAAYDQYG (66 aa). The CR-type zinc-finger motif lies at 140–218; it reads GYDTQIRVPS…CHGAGKVKET (79 aa). The Zn(2+) site is built by Cys153, Cys156, Cys170, Cys173, Cys192, Cys195, Cys206, and Cys209. CXXCXGXG motif repeat units follow at residues 153-160, 170-177, 192-199, and 206-213; these read CEVCHGSG, CPTCSGSG, CPKCHGTG, and CGHCHGAG.

Belongs to the DnaJ family. In terms of assembly, homodimer. Zn(2+) serves as cofactor.

Its subcellular location is the cytoplasm. In terms of biological role, participates actively in the response to hyperosmotic and heat shock by preventing the aggregation of stress-denatured proteins and by disaggregating proteins, also in an autonomous, DnaK-independent fashion. Unfolded proteins bind initially to DnaJ; upon interaction with the DnaJ-bound protein, DnaK hydrolyzes its bound ATP, resulting in the formation of a stable complex. GrpE releases ADP from DnaK; ATP binding to DnaK triggers the release of the substrate protein, thus completing the reaction cycle. Several rounds of ATP-dependent interactions between DnaJ, DnaK and GrpE are required for fully efficient folding. Also involved, together with DnaK and GrpE, in the DNA replication of plasmids through activation of initiation proteins. In Paraburkholderia xenovorans (strain LB400), this protein is Chaperone protein DnaJ.